A 455-amino-acid chain; its full sequence is Glutamate-1-semialdehyde 2,1-aminomutase (455 aa).

N6-(pyridoxal phosphate)lysine is present on Lys286.

The protein belongs to the class-III pyridoxal-phosphate-dependent aminotransferase family. HemL subfamily. As to quaternary structure, homodimer. The cofactor is pyridoxal 5'-phosphate.

The protein resides in the cytoplasm. It catalyses the reaction (S)-4-amino-5-oxopentanoate = 5-aminolevulinate. Its pathway is porphyrin-containing compound metabolism; protoporphyrin-IX biosynthesis; 5-aminolevulinate from L-glutamyl-tRNA(Glu): step 2/2. This Clavibacter sepedonicus (Clavibacter michiganensis subsp. sepedonicus) protein is Glutamate-1-semialdehyde 2,1-aminomutase.